The following is a 612-amino-acid chain: Elongation factor 4 (612 aa).

The 183-residue stretch at 11 to 193 (KHIRNFAIVA…KVVKDIPAPS (183 aa)) folds into the tr-type G domain. GTP contacts are provided by residues 23–28 (DHGKST) and 140–143 (NKID).

Belongs to the TRAFAC class translation factor GTPase superfamily. Classic translation factor GTPase family. LepA subfamily.

The protein localises to the cell membrane. The catalysed reaction is GTP + H2O = GDP + phosphate + H(+). In terms of biological role, required for accurate and efficient protein synthesis under certain stress conditions. May act as a fidelity factor of the translation reaction, by catalyzing a one-codon backward translocation of tRNAs on improperly translocated ribosomes. Back-translocation proceeds from a post-translocation (POST) complex to a pre-translocation (PRE) complex, thus giving elongation factor G a second chance to translocate the tRNAs correctly. Binds to ribosomes in a GTP-dependent manner. The sequence is that of Elongation factor 4 from Lactobacillus helveticus (strain DPC 4571).